A 346-amino-acid chain; its full sequence is Phosphoribosylformylglycinamidine cyclo-ligase (346 aa).

Belongs to the AIR synthase family.

It localises to the cytoplasm. It carries out the reaction 2-formamido-N(1)-(5-O-phospho-beta-D-ribosyl)acetamidine + ATP = 5-amino-1-(5-phospho-beta-D-ribosyl)imidazole + ADP + phosphate + H(+). It participates in purine metabolism; IMP biosynthesis via de novo pathway; 5-amino-1-(5-phospho-D-ribosyl)imidazole from N(2)-formyl-N(1)-(5-phospho-D-ribosyl)glycinamide: step 2/2. The sequence is that of Phosphoribosylformylglycinamidine cyclo-ligase from Vibrio campbellii (strain ATCC BAA-1116).